The following is a 707-amino-acid chain: GDNF-inducible zinc finger protein 1 (707 aa).

The BTB domain maps to 31 to 103 (CDVTVIVDYQ…VYTARVRVKE (73 aa)). Over residues 149–165 (VEASSGPQVSVTPSSKA) the composition is skewed to polar residues. Disordered regions lie at residues 149–221 (VEAS…PKIR) and 243–309 (RRLR…KDGE). Composition is skewed to basic and acidic residues over residues 198 to 213 (PSKK…KDVA), 243 to 278 (RRLR…EPAS), and 287 to 298 (VEREESLQKVEG). C2H2-type zinc fingers lie at residues 316-338 (FQCT…IKYH), 347-370 (YRCD…RHVH), 376-399 (FPCE…LQVH), 406-428 (HRCG…ERTH), 434-456 (YGCT…LRVH), 462-484 (FVCD…KRCH), 490-512 (FMCE…NRIH), 518-540 (FKCE…IKVH), 546-568 (YCCD…HRIH), and 574-596 (YMCN…TSIH). A Phosphoserine modification is found at serine 612.

This sequence belongs to the krueppel C2H2-type zinc-finger protein family. Interacts with NCL.

It localises to the cytoplasm. It is found in the nucleus. The protein resides in the nucleoplasm. The protein localises to the nucleolus. Its function is as follows. Transcriptional repressor that binds the GZF1 responsive element (GRE) (consensus: 5'-TGCGCN[TG][CA]TATA-3'). May be regulating VSX2/HOX10 expression. The chain is GDNF-inducible zinc finger protein 1 (Gzf1) from Rattus norvegicus (Rat).